Reading from the N-terminus, the 347-residue chain is MSAQNPVLTPEKRGEDVDSALRPQTLDDFTGQAEARANLKIFIEAAKNRGEALDHVLFVGPPGLGKTTLAQIMAKELGVNFRSTSGPVIAKAGDLAALLTNLEERDVLFIDEIHRLSPAVEEILYPAMEDFQLDLIIGEGPAARSVKIDLSKFTLVAATTRLGLLTTPLRDRFGIPVRLSFYTVEELELIVRRGARLMGLGMTDDGAREIARRARGTPRIAGRLLRRVRDFAEVARAPAVTREIADEALTRLLVDNMGLDQLDTRYLTMIAVNFGGGPVGIETIAAGLSEPRDAIEDIIEPYMIQQGFIQRTPRGRVLTAIAWKHLGLMPPKDMEAAQFRLTLEDDD.

The interval 1 to 182 is large ATPase domain (RuvB-L); sequence MSAQNPVLTP…FGIPVRLSFY (182 aa). ATP contacts are provided by residues Leu-21, Arg-22, Gly-63, Lys-66, Thr-67, Thr-68, 129 to 131, Arg-172, Tyr-182, and Arg-219; that span reads EDF. A Mg(2+)-binding site is contributed by Thr-67. Residues 183–253 form a small ATPAse domain (RuvB-S) region; the sequence is TVEELELIVR…IADEALTRLL (71 aa). Residues 256-347 are head domain (RuvB-H); the sequence is NMGLDQLDTR…QFRLTLEDDD (92 aa). 3 residues coordinate DNA: Arg-292, Arg-311, and Arg-316.

The protein belongs to the RuvB family. Homohexamer. Forms an RuvA(8)-RuvB(12)-Holliday junction (HJ) complex. HJ DNA is sandwiched between 2 RuvA tetramers; dsDNA enters through RuvA and exits via RuvB. An RuvB hexamer assembles on each DNA strand where it exits the tetramer. Each RuvB hexamer is contacted by two RuvA subunits (via domain III) on 2 adjacent RuvB subunits; this complex drives branch migration. In the full resolvosome a probable DNA-RuvA(4)-RuvB(12)-RuvC(2) complex forms which resolves the HJ.

It is found in the cytoplasm. The enzyme catalyses ATP + H2O = ADP + phosphate + H(+). The RuvA-RuvB-RuvC complex processes Holliday junction (HJ) DNA during genetic recombination and DNA repair, while the RuvA-RuvB complex plays an important role in the rescue of blocked DNA replication forks via replication fork reversal (RFR). RuvA specifically binds to HJ cruciform DNA, conferring on it an open structure. The RuvB hexamer acts as an ATP-dependent pump, pulling dsDNA into and through the RuvAB complex. RuvB forms 2 homohexamers on either side of HJ DNA bound by 1 or 2 RuvA tetramers; 4 subunits per hexamer contact DNA at a time. Coordinated motions by a converter formed by DNA-disengaged RuvB subunits stimulates ATP hydrolysis and nucleotide exchange. Immobilization of the converter enables RuvB to convert the ATP-contained energy into a lever motion, pulling 2 nucleotides of DNA out of the RuvA tetramer per ATP hydrolyzed, thus driving DNA branch migration. The RuvB motors rotate together with the DNA substrate, which together with the progressing nucleotide cycle form the mechanistic basis for DNA recombination by continuous HJ branch migration. Branch migration allows RuvC to scan DNA until it finds its consensus sequence, where it cleaves and resolves cruciform DNA. The protein is Holliday junction branch migration complex subunit RuvB of Allorhizobium ampelinum (strain ATCC BAA-846 / DSM 112012 / S4) (Agrobacterium vitis (strain S4)).